The primary structure comprises 345 residues: Succinylglutamate desuccinylase (345 aa).

The Zn(2+) site is built by His63, Glu66, and His160. Glu224 is a catalytic residue.

This sequence belongs to the AspA/AstE family. Succinylglutamate desuccinylase subfamily. The cofactor is Zn(2+).

The catalysed reaction is N-succinyl-L-glutamate + H2O = L-glutamate + succinate. It participates in amino-acid degradation; L-arginine degradation via AST pathway; L-glutamate and succinate from L-arginine: step 5/5. In terms of biological role, transforms N(2)-succinylglutamate into succinate and glutamate. This chain is Succinylglutamate desuccinylase, found in Shewanella woodyi (strain ATCC 51908 / MS32).